The sequence spans 182 residues: Translation initiation factor IF-3 (182 aa).

A disordered region spans residues 1-22 (MPLGDCNISTPDNKQNRKNQEI).

Belongs to the IF-3 family. In terms of assembly, monomer.

The protein localises to the cytoplasm. In terms of biological role, IF-3 binds to the 30S ribosomal subunit and shifts the equilibrium between 70S ribosomes and their 50S and 30S subunits in favor of the free subunits, thus enhancing the availability of 30S subunits on which protein synthesis initiation begins. In Xanthomonas axonopodis pv. citri (strain 306), this protein is Translation initiation factor IF-3.